The following is a 234-amino-acid chain: Golgi SNAP receptor complex member 1 (234 aa).

At 1–212 (MSETWEALRK…MQKIKTKKQK (212 aa)) the chain is on the cytoplasmic side. Residues 54 to 121 (VTTEIEGLIE…RDNVDQVLQR (68 aa)) adopt a coiled-coil conformation. The helical; Anchor for type IV membrane protein transmembrane segment at 213–233 (NTLILAAVISSCLIFTIFWII) threads the bilayer. Residue Asn-234 is a topological domain, vesicular.

It belongs to the GOSR1 family. Component of several multiprotein Golgi SNARE complexes.

It is found in the golgi apparatus membrane. Its function is as follows. Involved in transport from the ER to the Golgi apparatus as well as in intra-Golgi transport. It belongs to a super-family of proteins called t-SNAREs or soluble NSF (N-ethylmaleimide-sensitive factor) attachment protein receptor. Cooperates with ykt-6 for proper expression of Golgi-resident proteins. Required along with ykt-6 for normal embryonic development, seam cell division or differentiation, and ray formation. This chain is Golgi SNAP receptor complex member 1 (gos-28), found in Caenorhabditis elegans.